The primary structure comprises 241 residues: Methylthioribulose-1-phosphate dehydratase (241 aa).

A substrate-binding site is contributed by Cys-102. Positions 120, 122, and 199 each coordinate Zn(2+).

Belongs to the aldolase class II family. MtnB subfamily. Zn(2+) is required as a cofactor.

It localises to the cytoplasm. It catalyses the reaction 5-(methylsulfanyl)-D-ribulose 1-phosphate = 5-methylsulfanyl-2,3-dioxopentyl phosphate + H2O. It functions in the pathway amino-acid biosynthesis; L-methionine biosynthesis via salvage pathway; L-methionine from S-methyl-5-thio-alpha-D-ribose 1-phosphate: step 2/6. Catalyzes the dehydration of methylthioribulose-1-phosphate (MTRu-1-P) into 2,3-diketo-5-methylthiopentyl-1-phosphate (DK-MTP-1-P). The chain is Methylthioribulose-1-phosphate dehydratase from Coprinopsis cinerea (strain Okayama-7 / 130 / ATCC MYA-4618 / FGSC 9003) (Inky cap fungus).